The sequence spans 763 residues: MAP7 domain-containing protein 2 (763 aa).

A compositionally biased stretch (gly residues) spans Met1–Thr11. 4 disordered regions span residues Met1–Arg63, Trp96–Glu124, Ser149–Lys268, and Pro300–Glu540. Residues Ser52–Arg63 show a composition bias toward basic and acidic residues. A coiled-coil region spans residues Glu54–Lys147. The span at Glu192 to Ser206 shows a compositional bias: polar residues. Basic and acidic residues-rich tracts occupy residues Met355 to Gly371, Ala385 to Ala400, and Leu430 to Glu540.

Belongs to the MAP7 family. Interacts (via N-terminus) with microtubules; facilitates microtubule stabilization. Interacts with kinesin-1 family members, KIF5A, KIF5B and KIF5C.

It localises to the cytoplasm. Its subcellular location is the cytoskeleton. The protein resides in the microtubule organizing center. The protein localises to the centrosome. It is found in the midbody. It localises to the cell projection. Its subcellular location is the neuron projection. The protein resides in the axon. Functionally, microtubule-stabilizing protein involved in the control of cell motility and neurite outgrowth. Acts as a critical cofactor for kinesin transport; in the proximal axon regulates kinesin-1 family members, KIF5A, KIF5B and KIF5C recruitment to microtubules and contributes to kinesin-1-mediated transport in the axons. The protein is MAP7 domain-containing protein 2 (MAP7D2) of Pongo abelii (Sumatran orangutan).